The chain runs to 72 residues: NAD(P)H-quinone oxidoreductase subunit O (72 aa).

The protein belongs to the complex I NdhO subunit family. As to quaternary structure, NDH-1 can be composed of about 15 different subunits; different subcomplexes with different compositions have been identified which probably have different functions.

The protein localises to the cellular thylakoid membrane. The catalysed reaction is a plastoquinone + NADH + (n+1) H(+)(in) = a plastoquinol + NAD(+) + n H(+)(out). It catalyses the reaction a plastoquinone + NADPH + (n+1) H(+)(in) = a plastoquinol + NADP(+) + n H(+)(out). Functionally, NDH-1 shuttles electrons from an unknown electron donor, via FMN and iron-sulfur (Fe-S) centers, to quinones in the respiratory and/or the photosynthetic chain. The immediate electron acceptor for the enzyme in this species is believed to be plastoquinone. Couples the redox reaction to proton translocation, and thus conserves the redox energy in a proton gradient. Cyanobacterial NDH-1 also plays a role in inorganic carbon-concentration. In Synechococcus elongatus (strain ATCC 33912 / PCC 7942 / FACHB-805) (Anacystis nidulans R2), this protein is NAD(P)H-quinone oxidoreductase subunit O.